Here is a 370-residue protein sequence, read N- to C-terminus: NADH-quinone oxidoreductase subunit D (370 aa).

It belongs to the complex I 49 kDa subunit family. In terms of assembly, NDH-1 is composed of 14 different subunits. Subunits NuoB, C, D, E, F, and G constitute the peripheral sector of the complex.

The protein resides in the cell membrane. The enzyme catalyses a quinone + NADH + 5 H(+)(in) = a quinol + NAD(+) + 4 H(+)(out). In terms of biological role, NDH-1 shuttles electrons from NADH, via FMN and iron-sulfur (Fe-S) centers, to quinones in the respiratory chain. The immediate electron acceptor for the enzyme in this species is believed to be a menaquinone. Couples the redox reaction to proton translocation (for every two electrons transferred, four hydrogen ions are translocated across the cytoplasmic membrane), and thus conserves the redox energy in a proton gradient. This Desulfitobacterium hafniense (strain Y51) protein is NADH-quinone oxidoreductase subunit D.